The sequence spans 563 residues: 3-oxosteroid 1-dehydrogenase (563 aa).

Residue Asp-7 to Lys-36 participates in FAD binding.

This sequence belongs to the FAD-dependent oxidoreductase 2 family. 3-oxosteroid dehydrogenase subfamily. The cofactor is FAD.

The enzyme catalyses a 3-oxosteroid + A = a 3-oxo-Delta(1)-steroid + AH2. The catalysed reaction is a 3-oxo-Delta(4)-steroid + A = a 3-oxo-Delta(1,4)-steroid + AH2. It carries out the reaction 3-oxochol-4-en-22-oyl-CoA + NAD(+) = 3-oxochola-1,4-dien-22-oyl-CoA + NADH + H(+). In terms of biological role, involved in the degradation of cholesterol. Catalyzes the elimination of the C-1 and C-2 hydrogen atoms of the A-ring from the polycyclic ring structure of 3-ketosteroids. Has a clear preference for 3-ketosteroids with a saturated A-ring, displaying highest activity on 5alpha-AD (5alpha-androstane-3,17-dione) and 5alpha-T (5alpha-testosterone, also known as 17beta-hydroxy-5alpha-androstane-3-one). Is also involved in the formation of 3-keto-1,4-diene-steroid from 3-keto-4-ene-steroid. Catalyzes the conversion of 3-oxo-23,24-bisnorchol-4-en-22-oyl-coenzyme A thioester (4-BNC-CoA) to 3-oxo-23,24-bisnorchola-1,4-dien-22-oyl-coenzyme A thioester (1,4-BNC-CoA). The sequence is that of 3-oxosteroid 1-dehydrogenase (kstD) from Mycobacterium tuberculosis (strain ATCC 25618 / H37Rv).